We begin with the raw amino-acid sequence, 288 residues long: Syntaxin-1A (288 aa).

Residues 1-13 are compositionally biased toward basic and acidic residues; that stretch reads MKDRTQELRTAKD. The segment at 1 to 20 is disordered; that stretch reads MKDRTQELRTAKDSDDDDDV. At 1-265 the chain is on the cytoplasmic side; it reads MKDRTQELRT…KYQSKARRKK (265 aa). A phosphoserine mark is found at S14, S64, and S95. Positions 68–109 form a coiled coil; that stretch reads DEKTKEELEELMSDIKKTANKVRSKLKSIEQSIEQEEGLNRS. S188 is subject to Phosphoserine; by DAPK1. Residues 192 to 254 enclose the t-SNARE coiled-coil homology domain; the sequence is LSEIETRHSE…ERAVSDTKKA (63 aa). Residues K252, K253, and K256 each participate in a glycyl lysine isopeptide (Lys-Gly) (interchain with G-Cter in SUMO) cross-link. Residues 266-288 traverse the membrane as a helical; Anchor for type IV membrane protein segment; that stretch reads IMIIICCVILGIIIASTIGGIFG.

Belongs to the syntaxin family. In terms of assembly, part of the SNARE core complex containing SNAP25, VAMP2 and STX1A; this complex constitutes the basic catalytic machinery of the complex neurotransmitter release apparatus. The SNARE complex interacts with CPLX1. Interacts with STXBP1. The interaction with STXBP1 promotes assembly of the SNARE complex. Interacts (via C-terminus) with KCNB1 (via C-terminus); the interaction increases in a calcium-dependent manner and induces a pore-independent enhancement of exocytosis in neuroendocrine cells, chromaffin cells, pancreatic beta cells and from the soma of dorsal root ganglia (DRG) neurons. Interacts with SYTL4. Interacts with STXBP6. Interacts with PLCL1 (via C2 domain). Interacts with OTOF. Interacts with LGI3. Interacts (via the H3 domain) with SLC6A4 (via the N-terminus); this interaction regulates SLC4A6 channel conductance in thalamocortical neurons. Interacts with SYT6 and SYT8; the interaction is Ca(2+)-dependent. Interacts with VAMP8. Interacts with SNAP23. Interacts with VAPA and SYBU. Interacts with PRRT2. Interacts with SEPT8. Interacts with STXBP5L. Interacts with synaptotagmin-1/SYT1. Interacts with SEPTIN5; in the cerebellar cortex. Interacts with SEPTIN4; in the striatum. Post-translationally, phosphorylated by CK2. Phosphorylation at Ser-188 by DAPK1 significantly decreases its interaction with STXBP1. In terms of processing, (Microbial infection) Targeted and hydrolyzed by C.botulinum neurotoxin type C (BoNT/C), which hydrolyzes the 253-Lys-|-Ala-254 bond. Cleavage inhibits neurotransmitter release. Phosphorylated by CK2. Phosphorylation at Ser-188 by DAPK1 significantly decreases its interaction with STXBP1. Post-translationally, sumoylated, sumoylation is required for regulation of synaptic vesicle endocytosis. In terms of tissue distribution, expressed predominantly in cerebral cortex, hippocampus, cerebellum, adrenal medulla and retina with weak expression detected in non-neuronal tissues.

The protein localises to the cytoplasmic vesicle. Its subcellular location is the secretory vesicle. It localises to the synaptic vesicle membrane. It is found in the cell membrane. The protein resides in the synapse. The protein localises to the synaptosome. Plays an essential role in hormone and neurotransmitter calcium-dependent exocytosis and endocytosis. Part of the SNARE (Soluble NSF Attachment Receptor) complex composed of SNAP25, STX1A and VAMP2 which mediates the fusion of synaptic vesicles with the presynaptic plasma membrane. STX1A and SNAP25 are localized on the plasma membrane while VAMP2 resides in synaptic vesicles. The pairing of the three SNAREs from the N-terminal SNARE motifs to the C-terminal anchors leads to the formation of the SNARE complex, which brings membranes into close proximity and results in final fusion. Participates in the calcium-dependent regulation of acrosomal exocytosis in sperm. Also plays an important role in the exocytosis of hormones such as insulin or glucagon-like peptide 1 (GLP-1). The polypeptide is Syntaxin-1A (Stx1a) (Rattus norvegicus (Rat)).